Consider the following 557-residue polypeptide: Leucine-rich glioma-inactivated protein 1 (557 aa).

Residues 1–34 form the signal peptide; it reads MESERSKRMGNACIPLKRIAYFLCLLSALLLTEG. Positions 35-72 constitute an LRRNT domain; the sequence is KKPAKPKCPAVCTCTKDNALCENARSIPRTVPPDVISL. 3 LRR repeats span residues 92–113, 116–137, and 140–161; these read SLQLLLFTSNSFDVISDDAFIG, HLEYLFIENNNIKSISRHTFRG, and SLIHLSLANNNLQTLPKDIFKG. An LRRCT domain is found at 173 to 223; it reads NSFNCDCKLKWLVEWLGHTNATVEDIYCEGPPEYKKRKINSLSSKDFDCII. Asparagine 192 is a glycosylation site (N-linked (GlcNAc...) asparagine). 7 EAR repeats span residues 225–267, 271–313, 317–364, 366–415, 419–462, 464–506, and 510–552; these read EFAK…EWDH, TFRN…KRDS, KFIK…KWNG, GFYS…QWNK, LFTN…KWGG, SFQD…NWDA, and KFVK…KHVI. N-linked (GlcNAc...) asparagine glycosylation occurs at asparagine 277. An N-linked (GlcNAc...) asparagine glycan is attached at asparagine 422.

Oligomer. Interacts with KCNA1 within a complex containing KCNA1, KCNA4 and KCNAB1. Part of a complex containing ADAM22, DLG4/PSD95 and CACNG2/Stargazin. Can bind to ADAM11 and ADAM23. In terms of processing, glycosylated. Predominantly expressed in neural tissues, especially in brain. Expression is reduced in low-grade brain tumors and significantly reduced or absent in malignant gliomas. In terms of tissue distribution, expressed in the occipital cortex and hippocampus; higher amounts are observed in the parietal and frontal cortices, putamen, and, particularly, in the temporal neocortex, where it is between 3 and 5 times more abundant than in the hippocampus (at protein level). Expression is absent in the cerebellum. As to expression, abundantly expressed in the occipital cortex and weakly expressed in the hippocampus (at protein level).

It is found in the secreted. The protein localises to the synapse. Its subcellular location is the cytoplasm. The protein resides in the golgi apparatus. It localises to the endoplasmic reticulum. Its function is as follows. Regulates voltage-gated potassium channels assembled from KCNA1, KCNA4 and KCNAB1. It slows down channel inactivation by precluding channel closure mediated by the KCNAB1 subunit. Ligand for ADAM22 that positively regulates synaptic transmission mediated by AMPA-type glutamate receptors. Plays a role in suppressing the production of MMP1/3 through the phosphatidylinositol 3-kinase/ERK pathway. May play a role in the control of neuroblastoma cell survival. This Homo sapiens (Human) protein is Leucine-rich glioma-inactivated protein 1 (LGI1).